A 332-amino-acid chain; its full sequence is Probable xyloglucan endotransglucosylase/hydrolase protein 28 (332 aa).

The signal sequence occupies residues 1–22 (MGFITRFLVFMSLFTSLVSGFA). Residues 23–223 (LQKLPLIQFD…YKYAPYVSQF (201 aa)) enclose the GH16 domain. Glutamate 108 acts as the Nucleophile in catalysis. Catalysis depends on glutamate 112, which acts as the Proton donor. Xyloglucan is bound by residues glutamate 112 and 125 to 127 (QTN). N-linked (GlcNAc...) asparagine glycosylation is present at asparagine 131. Xyloglucan-binding positions include 135 to 139 (HLGRE), 202 to 203 (KW), glycine 207, and arginine 282. A disulfide bridge connects residues cysteine 277 and cysteine 290. The segment covering 313-326 (HGHRRGKHRSRSRL) has biased composition (basic residues). The tract at residues 313-332 (HGHRRGKHRSRSRLARTESI) is disordered.

The protein belongs to the glycosyl hydrolase 16 family. XTH group 3 subfamily. Contains at least one intrachain disulfide bond essential for its enzymatic activity. As to expression, expressed in 7 day old seedlings, roots, rosette leaves, internodes between nodes bearing axillary shoots, nodes bearing flowers, flower buds and siliques.

It localises to the secreted. Its subcellular location is the cell wall. It is found in the extracellular space. The protein localises to the apoplast. The catalysed reaction is breaks a beta-(1-&gt;4) bond in the backbone of a xyloglucan and transfers the xyloglucanyl segment on to O-4 of the non-reducing terminal glucose residue of an acceptor, which can be a xyloglucan or an oligosaccharide of xyloglucan.. Catalyzes xyloglucan endohydrolysis (XEH) and/or endotransglycosylation (XET). Cleaves and religates xyloglucan polymers, an essential constituent of the primary cell wall, and thereby participates in cell wall construction of growing tissues. This Arabidopsis thaliana (Mouse-ear cress) protein is Probable xyloglucan endotransglucosylase/hydrolase protein 28 (XTH28).